A 791-amino-acid chain; its full sequence is Cytochrome c oxidase polypeptide I+III (791 aa).

A COX1 region spans residues 1-473 (MAITAKPKAG…LLSTIGAYIL (473 aa)). A helical membrane pass occupies residues 29-49 (LMYTATAFFAFALAGVFSLLI). His73 contributes to the Fe(II)-heme a binding site. Transmembrane regions (helical) follow at residues 78 to 98 (LFFFIIQAGLTGFGNFVVPLM), 111 to 131 (AFSYWAFLGAIVLALMSYFFP), 155 to 175 (FYLAAILLLGFSSLLGNANFV), 201 to 221 (ASVLNLFSLAGLTAATLLVLL), 244 to 264 (FFWFYSHPTVYVMLLPYLGIL), 282 to 302 (MVWAQMGIVVLGTMVWAHHMF), 312 to 332 (IAFAFFTALIAVPTGVKLFNI), 347 to 367 (LYWVLGFIFNFLLGGITGVML), 381 to 401 (FVVAHFHNVLMAGSGFGAFAG), 423 to 443 (FWLFLVGYLLTFLPQYALGYL), 464 to 484 (LLSTIGAYILGLGGLVWIYTM), 566 to 586 (FAFFVAVAALPVPNVWMWVFL), 617 to 637 (AWMGMAWFIVSEVGLFAILIA), 657 to 677 (LWLALLNTFLLVSSSFTVHFA), 691 to 711 (FGLLVTIILGVLFFLVQSWEF), 729 to 749 (FFTIVGLHGLHVVIGGFGLIL), and 771 to 791 (SMYWHLVDAVWLVIVTIFYVW). 4 residues coordinate Cu cation: His250, Tyr254, His299, and His300. Positions 250–254 (HPTVY) form a cross-link, 1'-histidyl-3'-tyrosine (His-Tyr). His385 lines the heme a3 pocket. His387 contributes to the Fe(II)-heme a binding site. The tract at residues 545–791 (DPAHIHLPNS…LVIVTIFYVW (247 aa)) is COX3.

It in the N-terminal section; belongs to the heme-copper respiratory oxidase family. This sequence in the C-terminal section; belongs to the cytochrome c oxidase subunit 3 family. Possibly a heterodimer of A-protein (contains: cytochrome c oxidase subunits I and III) and subunit II. The A-protein could also present a precursor form of subunits I and III. The cofactor is Cu(2+). Heme serves as cofactor.

It is found in the cell membrane. It carries out the reaction 4 Fe(II)-[cytochrome c] + O2 + 8 H(+)(in) = 4 Fe(III)-[cytochrome c] + 2 H2O + 4 H(+)(out). Its pathway is energy metabolism; oxidative phosphorylation. Its function is as follows. Cytochrome c oxidase is the component of the respiratory chain that catalyzes the reduction of oxygen to water. Subunits 1-3 form the functional core of the enzyme complex. Co I is the catalytic subunit of the enzyme. Electrons originating in cytochrome c are transferred via the copper A center of subunit 2 and heme a of subunit 1 to the bimetallic center formed by heme a3 and copper B. This cytochrome c oxidase shows proton pump activity across the membrane in addition to the electron transfer. This is Cytochrome c oxidase polypeptide I+III (caaA) from Thermus thermophilus (strain ATCC 27634 / DSM 579 / HB8).